Reading from the N-terminus, the 697-residue chain is Probable translocation protein y4yR (697 aa).

Helical transmembrane passes span 20–40 (VALMLLLAVSMMVMPIPVMAV), 42–62 (ALIGFNMGLAVLLLMAALYVS), 67–87 (FSSLPGVILLSTVFRLALTVA), 107–127 (SFVISGNIVVGFVIFLVVTMV), 200–220 (SIAGLVVICINMLGGISIGLL), 235–255 (LLTIGDALISQIPALLLSITA), 293–313 (VAMGFVPGFPLPVFFMLAAVF), and 372–392 (IARISQLVSADLGIIVPPIPV). The disordered stretch occupies residues 675–697 (IRLPPSNGTSGEPRSIRPSATTG). Polar residues predominate over residues 680-697 (SNGTSGEPRSIRPSATTG).

The protein belongs to the FHIPEP (flagella/HR/invasion proteins export pore) family.

It localises to the cell inner membrane. Its function is as follows. Could be involved in the secretion of an unknown factor. This chain is Probable translocation protein y4yR, found in Sinorhizobium fredii (strain NBRC 101917 / NGR234).